The chain runs to 367 residues: DNA replication and repair protein RecF (367 aa).

Residue 30–37 (GANGSGKT) coordinates ATP.

The protein belongs to the RecF family.

The protein localises to the cytoplasm. In terms of biological role, the RecF protein is involved in DNA metabolism; it is required for DNA replication and normal SOS inducibility. RecF binds preferentially to single-stranded, linear DNA. It also seems to bind ATP. In Pseudomonas fluorescens (strain SBW25), this protein is DNA replication and repair protein RecF.